The chain runs to 405 residues: Multidrug resistance protein MdtA (405 aa).

The N-terminal stretch at 1–22 (MKTPRRFPLIALTVAAVLTAAA) is a signal peptide. Positions 35 to 52 (VQNRQGTEQQRASNSQGS) are enriched in polar residues. The interval 35–62 (VQNRQGTEQQRASNSQGSAKRAGNAPPV) is disordered.

This sequence belongs to the membrane fusion protein (MFP) (TC 8.A.1) family. Part of a tripartite efflux system composed of MdtA, MdtB and MdtC.

It localises to the cell inner membrane. The protein is Multidrug resistance protein MdtA of Erwinia amylovora (strain ATCC 49946 / CCPPB 0273 / Ea273 / 27-3).